A 298-amino-acid chain; its full sequence is ADP-ribosylation factor GTPase-activating protein effector protein 2 (298 aa).

At Ser-2 the chain carries N-acetylserine. The Arf-GAP domain occupies 8–130 (KKALSALLRD…KWIGDLSSIE (123 aa)). The C4-type zinc-finger motif lies at 23–47 (CADCKAQLHPRWASWSLGVFICIKC). The segment at 137–180 (EPVLHKPSANHSLPASNARLDQSSNSLQKTQTQPPSHLLSTSRS) is disordered. Residues 145-171 (ANHSLPASNARLDQSSNSLQKTQTQPP) are compositionally biased toward polar residues. Phosphoserine occurs at positions 180, 183, and 207.

It is found in the cytoplasm. It localises to the golgi apparatus. Functionally, GTPase-activating protein for the ADP ribosylation factor family. In Saccharomyces cerevisiae (strain ATCC 204508 / S288c) (Baker's yeast), this protein is ADP-ribosylation factor GTPase-activating protein effector protein 2 (AGE2).